A 494-amino-acid chain; its full sequence is MGGRVSKAVACCCCRSQHHGVVVESSEKTAEEDHGESYELPAFQEFSFEQLRLATSGFAVENIVSEHGEKAPNVVYKGKLDAQRRIAVKRFNRSAWPDPRQFLEEAKSVGQLRSKRLANLLGCCCEGDERLLVAEYMPNDTLAKHLFHWEAQAMKWPMRLRVVLYLAEALEYCTSKGRALYHDLNAYRVLFDDDCNPRLSCFGLMKNSRDGKSYSTNLAFTPPEYMRTGRITPESVIYSFGTLLLDVLSGKHIPPSHALDLIRDRNFNMLTDSCLEGQFSNEEGTELVRLASRCLHYEPRERPNVRSLVQALAPLQKDLETPSYELMDIPRGGATSVQSLLLSPLAEACSRKDLTAIHEILEKTGYKDDEGTANELSFQMWTNQMQDTLNSKKKGDNAFRQKDFSSAIDCYSQFIEVGTMVSPTIYARRCLSYLMNDKAEQALSDAMQALVISPTWPTAFYLQAAALLSLGMENEAQEAIKDGCAHETSSSSGH.

A lipid anchor (N-myristoyl glycine) is attached at glycine 2. A Protein kinase domain is found at 61 to 316 (ENIVSEHGEK…SLVQALAPLQ (256 aa)). ATP is bound by residues 67–75 (HGEKAPNVV) and lysine 89. Aspartate 183 serves as the catalytic Proton acceptor. Residues serine 213 and serine 215 each carry the phosphoserine modification. One copy of the TPR repeat lies at 423–456 (PTIYARRCLSYLMNDKAEQALSDAMQALVISPTW).

As to quaternary structure, interacts with BRI1 and BSL1. Post-translationally, phosphorylated at Ser-213 and Ser-215 by BRI1. Phosphorylation at Ser-215 is required for its function in the regulation of brassinosteroid signaling. Phosphorylation by BRI1 disrupts the interaction between its TPR and kinase domains, thereby increasing the binding between its kinase domain and BSL1.

It localises to the cell membrane. It carries out the reaction L-seryl-[protein] + ATP = O-phospho-L-seryl-[protein] + ADP + H(+). The enzyme catalyses L-threonyl-[protein] + ATP = O-phospho-L-threonyl-[protein] + ADP + H(+). Functionally, probable serine/threonine kinase that acts as a positive regulator of brassinosteroid (BR) signaling downstream of BRI1. This is Probable serine/threonine-protein kinase BSK3 from Oryza sativa subsp. japonica (Rice).